Reading from the N-terminus, the 378-residue chain is Lysocardiolipin acyltransferase 1 (378 aa).

2 helical membrane passes run 9-29 and 46-66; these read FVVALFLGSFFGSIFMLGPFL and IVATWLTLPVALLEMVFGAKV. The short motif at 85-90 is the HXXXXD motif element; that stretch reads HRTRMD. Transmembrane regions (helical) follow at residues 302–322 and 336–358; these read LRVLAVKCISLLYWTVFPMGT and FAAMIIIFVAQQKIFGGLELIEL.

This sequence belongs to the 1-acyl-sn-glycerol-3-phosphate acyltransferase family.

Its subcellular location is the endoplasmic reticulum membrane. The enzyme catalyses a 1-acyl-sn-glycero-3-phosphate + an acyl-CoA = a 1,2-diacyl-sn-glycero-3-phosphate + CoA. The catalysed reaction is a 1-acyl-sn-glycero-3-phospho-(1D-myo-inositol) + an acyl-CoA = a 1,2-diacyl-sn-glycero-3-phospho-(1D-myo-inositol) + CoA. It carries out the reaction 1-acyl-sn-glycero-3-phospho-(1'-sn-glycerol) + an acyl-CoA = a 1,2-diacyl-sn-glycero-3-phospho-(1'-sn-glycerol) + CoA. It catalyses the reaction 1-hexadecanoyl-sn-glycero-3-phosphate + (9Z)-octadecenoyl-CoA = 1-hexadecanoyl-2-(9Z-octadecenoyl)-sn-glycero-3-phosphate + CoA. The enzyme catalyses 1-(9Z-octadecenoyl)-sn-glycero-3-phosphate + (9Z)-octadecenoyl-CoA = 1,2-di-(9Z-octadecenoyl)-sn-glycero-3-phosphate + CoA. The catalysed reaction is 1-(9Z,12Z)-octadecadienoyl-sn-glycero-3-phosphate + (9Z)-octadecenoyl-CoA = 1-(9Z,12Z)-octadecadienoyl-2-(9Z)-octadecenoyl-sn-glycero-3-phosphate + CoA. It carries out the reaction 1-(9Z,12Z,15Z)-octadecatrienoyl-sn-glycero-3-phosphate + (9Z)-octadecenoyl-CoA = 1-(9Z,12Z,15Z)-octadecatrienoyl-2-(9Z)-octadecenoyl-sn-glycero-3-phosphate + CoA. It catalyses the reaction 1-(9Z-octadecenoyl)-sn-glycero-3-phosphate + hexadecanoyl-CoA = 1-(9Z)-octadecenoyl-2-hexadecanoyl-sn-glycero-3-phosphate + CoA. The enzyme catalyses 1-(9Z-octadecenoyl)-sn-glycero-3-phosphate + octadecanoyl-CoA = 1-(9Z-octadecenoyl)-2-octadecanoyl-sn-glycero-3-phosphate + CoA. The catalysed reaction is 1-acyl-sn-glycero-3-phospho-(1'-sn-glycerol) + (9Z)-octadecenoyl-CoA = 1-acyl-2-(9Z-octadecenoyl)-sn-glycero-3-phospho-(1'-sn-glycerol) + CoA. It carries out the reaction a 1-acyl-sn-glycero-3-phospho-(1D-myo-inositol) + (9Z)-octadecenoyl-CoA = a 1-acyl-2-(9Z-octadecenoyl)-sn-glycero-3-phospho-(1D-myo-inositol) + CoA. It catalyses the reaction 1-hexadecanoyl-sn-glycero-3-phospho-(1D-myo-inositol) + hexadecanoyl-CoA = 1,2-dihexadecanoyl-sn-glycero-3-phospho-(1D-myo-inositol) + CoA. The enzyme catalyses 1-hexadecanoyl-sn-glycero-3-phospho-(1D-myo-inositol) + octadecanoyl-CoA = 1-hexadecanoyl-2-octadecanoyl-sn-glycero-3-phospho-(1D-myo-inositol) + CoA. The catalysed reaction is 1-hexadecanoyl-sn-glycero-3-phospho-(1D-myo-inositol) + (9Z)-octadecenoyl-CoA = 1-hexadecanoyl-2-(9Z-octadecenoyl)-sn-glycero-3-phospho-(1D-myo-inositol) + CoA. It carries out the reaction 1-hexadecanoyl-sn-glycero-3-phospho-(1D-myo-inositol) + (9Z,12Z)-octadecadienoyl-CoA = 1-hexadecanoyl-2-(9Z,12Z-octadecadienoyl)-sn-glycero-3-phospho-(1D-myo-inositol) + CoA. It catalyses the reaction 1-hexadecanoyl-sn-glycero-3-phospho-(1D-myo-inositol) + (5Z,8Z,11Z,14Z)-eicosatetraenoyl-CoA = 1-hexadecanoyl-2-(5Z,8Z,11Z,14Z-eicosatetraenoyl)-sn-glycero-3-phospho-D-myo-inositol + CoA. The enzyme catalyses 1-hexadecanoyl-sn-glycero-3-phospho-(1'-sn-glycerol) + hexadecanoyl-CoA = 1,2-dihexadecanoyl-sn-glycero-3-phospho-(1'-sn-glycerol) + CoA. The catalysed reaction is 1-hexadecanoyl-sn-glycero-3-phospho-(1'-sn-glycerol) + octadecanoyl-CoA = 1-hexadecanoyl-2-octadecanoyl-sn-glycero-3-phospho-(1'-sn-glycerol) + CoA. It carries out the reaction 1-hexadecanoyl-sn-glycero-3-phospho-(1'-sn-glycerol) + (9Z)-octadecenoyl-CoA = 1-hexadecanoyl-2-(9Z-octadecenoyl)-sn-glycero-3-phospho-(1'-sn-glycerol) + CoA. It catalyses the reaction 1-hexadecanoyl-sn-glycero-3-phospho-(1'-sn-glycerol) + (9Z,12Z)-octadecadienoyl-CoA = 1-hexadecanoyl-2-(9Z,12Z-octadecadienoyl)-sn-glycero-3-phospho-(1'-sn-glycerol) + CoA. The enzyme catalyses 1-tetradecanoyl-sn-glycero-3-phospho-(1'-sn-glycerol) + (9Z)-octadecenoyl-CoA = 1-tetradecanoyl-2-(9Z-octadecenoyl)-sn-glycero-3-phospho-(1'-sn-glycerol) + CoA. The catalysed reaction is 1-octadecanoyl-sn-glycero-3-phospho-(1'-sn-glycerol) + (9Z)-octadecenoyl-CoA = 1-octadecanoyl-2-(9Z-octadecenoyl)-sn-glycero-3-phospho-(1'-sn-glycerol) + CoA. It carries out the reaction 1-(9Z-octadecenoyl)-sn-glycero-3-phospho-(1'-sn-glycerol) + (9Z)-octadecenoyl-CoA = 1,2-di-(9Z-octadecenoyl)-sn-glycero-3-phospho-(1'-sn-glycerol) + CoA. It catalyses the reaction 1-hexadecanoyl-sn-glycero-3-phospho-(1D-myo-inositol) + dodecanoyl-CoA = 1-hexadecanoyl-2-dodecanoyl-sn-glycero-3-phospho-(1D-myo-inositol) + CoA. The enzyme catalyses 1',3'-bis-[1-acyl-sn-glycero-3-phospho]-glycerol + (9Z)-octadecenoyl-CoA = 1'-[1-acyl-2-(9Z)-octadecenoyl-sn-glycero-3-phospho],3'-[1-acyl,2-hydroxy-sn-glycero-3-phospho]-glycerol + CoA. The catalysed reaction is 1'-[1,2-diacyl-sn-glycero-3-phospho],3'-[1-acyl-sn-glycero-3-phospho]-glycerol + (9Z)-octadecenoyl-CoA = 1'-[1,2-diacyl-sn-glycero-3-phospho],3'-[1-acyl,2-(9Z)-octadecenoyl-sn-glycero-3-phospho]-glycerol + CoA. It carries out the reaction 1'-[1,2-diacyl-sn-glycero-3-phospho],3'-[1-acyl-sn-glycero-3-phospho]-glycerol + (9Z,12Z)-octadecadienoyl-CoA = 1'-[1,2-diacyl-sn-glycero-3-phospho],3'-[1-acyl,2-(9Z,12Z)-octadecadienoyl-sn-glycero-3-phospho]-glycerol + CoA. It catalyses the reaction 1'-[1,2-diacyl-sn-glycero-3-phospho],3'-[1-acyl-sn-glycero-3-phospho]-glycerol + dodecanoyl-CoA = 1'-[1,2-diacyl-sn-glycero-3-phospho],3'-[1-acyl,2-dodecanoyl-sn-glycero-3-phospho]-glycerol + CoA. The enzyme catalyses 1',3'-bis-[1-acyl-sn-glycero-3-phospho]-glycerol + dodecanoyl-CoA = 1'-[1-acyl-2-dodecanoyl-sn-glycero-3-phospho],3'-[1-acyl,2-hydroxy-sn-glycero-3-phospho]-glycerol + CoA. The catalysed reaction is a 1-acyl-sn-glycero-3-phosphate + (9Z)-octadecenoyl-CoA = a 1-acyl-2-(9Z-octadecenoyl)-sn-glycero-3-phosphate + CoA. It carries out the reaction 1',3'-bis-[1-acyl-sn-glycero-3-phospho]-glycerol + (9Z,12Z)-octadecadienoyl-CoA = 1'-[1-acyl-2-(9Z,12Z)-octadecadienoyl-sn-glycero-3-phospho],3'-[1-acyl,2-hydroxy-sn-glycero-3-phospho]-glycerol + CoA. It catalyses the reaction 1',3'-bis-[1-acyl-sn-glycero-3-phospho]-glycerol + hexadecanoyl-CoA = 1'-[1-acyl-2-hexadecanoyl-sn-glycero-3-phospho],3'-[1-acyl,2-hydroxy-sn-glycero-3-phospho]-glycerol + CoA. The enzyme catalyses 1',3'-bis-[1-acyl-sn-glycero-3-phospho]-glycerol + octadecanoyl-CoA = 1'-[1-acyl-2-octadecanoyl-sn-glycero-3-phospho],3'-[1-acyl,2-hydroxy-sn-glycero-3-phospho]-glycerol + CoA. The catalysed reaction is 1'-[1,2-diacyl-sn-glycero-3-phospho],3'-[1-acyl-sn-glycero-3-phospho]-glycerol + octanoyl-CoA = 1'-[1,2-diacyl-sn-glycero-3-phospho],3'-[1-acyl,2-octanoyl-sn-glycero-3-phospho]-glycerol + CoA. It carries out the reaction 1',3'-bis-[1-acyl-sn-glycero-3-phospho]-glycerol + octanoyl-CoA = 1'-[1-acyl-2-octanoyl-sn-glycero-3-phospho],3'-[1-acyl,2-hydroxy-sn-glycero-3-phospho]-glycerol + CoA. It catalyses the reaction 1'-[1,2-diacyl-sn-glycero-3-phospho],3'-[1-acyl-sn-glycero-3-phospho]-glycerol + hexadecanoyl-CoA = 1'-[1,2-diacyl-sn-glycero-3-phospho],3'-[1-acyl,2-hexadecanoyl-sn-glycero-3-phospho]-glycerol + CoA. The enzyme catalyses 1'-[1,2-diacyl-sn-glycero-3-phospho],3'-[1-acyl-sn-glycero-3-phospho]-glycerol + (5Z,8Z,11Z,14Z)-eicosatetraenoyl-CoA = 1'-[1,2-diacyl-sn-glycero-3-phospho],3'-[1-acyl,2-(5Z,8Z,11Z,14Z)-eicosatetraenoyl-sn-glycero-3-phospho]-glycerol + CoA. The catalysed reaction is 1',3'-bis-[1-acyl-sn-glycero-3-phospho]-glycerol + (5Z,8Z,11Z,14Z)-eicosatetraenoyl-CoA = 1'-[1-acyl-2-(5Z,8Z,11Z,14Z)-eicosatetraenoyl-sn-glycero-3-phospho],3'-[1-acyl,2-hydroxy-sn-glycero-3-phospho]-glycerol + CoA. It carries out the reaction a 1-acyl-sn-glycero-3-phospho-(1D-myo-inositol) + octadecanoyl-CoA = a 1-acyl-2-octadecanoyl-sn-glycero-3-phospho-(1D-myo-inositol) + CoA. It catalyses the reaction a 2-acyl-sn-glycero-3-phospho-D-myo-inositol + octadecanoyl-CoA = 1-octadecanoyl-2-acyl-sn-glycero-3-phospho-1D-myo-inositol + CoA. It functions in the pathway phospholipid metabolism; CDP-diacylglycerol biosynthesis; CDP-diacylglycerol from sn-glycerol 3-phosphate: step 2/3. In terms of biological role, exhibits acyl-CoA:lysocardiolipin acyltransferase (ALCAT) activity; catalyzes the reacylation of lyso-cardiolipin to cardiolipin (CL), a key step in CL remodeling. Recognizes both monolysocardiolipin and dilysocardiolipin as substrates with a preference for linoleoyl-CoA and oleoyl-CoA as acyl donors. Also exhibits 1-acyl-sn-glycerol-3-phosphate acyltransferase activity (AGPAT) activity; converts 1-acyl-sn-glycerol-3- phosphate (lysophosphatidic acid or LPA) into 1,2-diacyl-sn-glycerol-3- phosphate (phosphatidic acid or PA) by incorporating an acyl moiety at the sn-2 position of the glycerol backbone. Possesses both lysophosphatidylinositol acyltransferase (LPIAT) and lysophosphatidylglycerol acyltransferase (LPGAT) activities. Required for establishment of the hematopoietic and endothelial lineages. In Gallus gallus (Chicken), this protein is Lysocardiolipin acyltransferase 1 (LCLAT1).